Reading from the N-terminus, the 181-residue chain is MSFVPTKVFFTKGVGRHKEYLSSFELALREAKIEKCNLVTVSSIFPPQCERISVEEGLKSLSPGEITFAVMARNSTNEHGRLIASSIGVALPADESVYGYLSEHHPYGQTEEQSGEYAEDLAATMLATTLGIEFDPNKDWDEREGIYKMSGKIINSFNITQSAEGQNGLWTTVIACAVLLP.

Serine 43 carries the pyruvic acid (Ser) modification.

The protein belongs to the PdaD family. Requires pyruvate as cofactor.

The enzyme catalyses L-arginine + H(+) = agmatine + CO2. This is Probable pyruvoyl-dependent arginine decarboxylase from Prosthecochloris aestuarii (strain DSM 271 / SK 413).